The following is a 336-amino-acid chain: Ferrochelatase (336 aa).

Residues His206 and Glu287 each contribute to the Fe cation site.

The protein belongs to the ferrochelatase family.

Its subcellular location is the cytoplasm. It carries out the reaction heme b + 2 H(+) = protoporphyrin IX + Fe(2+). It participates in porphyrin-containing compound metabolism; protoheme biosynthesis; protoheme from protoporphyrin-IX: step 1/1. Catalyzes the ferrous insertion into protoporphyrin IX. The protein is Ferrochelatase of Neisseria meningitidis serogroup B (strain ATCC BAA-335 / MC58).